The following is a 496-amino-acid chain: Flt3-interacting zinc finger protein 1 (496 aa).

Residue M1 is modified to N-acetylmethionine. C2H2-type zinc fingers lie at residues 23–45, 51–73, 79–101, 107–130, 200–222, and 228–250; these read FHCSECGKSFRYRSDLRRHFARH, HACPRCGKGFKHSFNLANHLRSH, YRCSACPKGFRDSTGLLHHQVVH, YCCLVCELRFSSRSSLGRHLKRQH, FACGACARRFDHGRELAAHWAAH, and FKCPRCERDFNAPALLERHKLTH. Positions 250–280 are disordered; sequence HDLQGPGAPPAQAWAAGPGAGPETAGEGTAA. The span at 259–280 shows a compositional bias: low complexity; it reads PAQAWAAGPGAGPETAGEGTAA. 5 consecutive C2H2-type zinc fingers follow at residues 331–352, 358–381, 414–436, 442–464, and 470–492; these read YQCDCGTFFASAAALASHLEAH, YGCGHCGALYAALAALEEHRRVSH, FGCSECEKLFRSPRDLERHVLVH, FPCLECGKFFRHECYLKRHRLLH, and FPCHICGKGFITLSNLSRHLKLH. The tract at residues 378–412 is disordered; sequence RVSHGEGGGEEAATAAREREPASGEPPSGSGRGKK.

In terms of assembly, interacts with FLT3 cytoplasmic catalytic domain, following receptor stimulation, in a kinase-independent manner. Does not interact with other structurally related receptor tyrosine kinases, including KIT, CSF1R and PDGFR. Interacts with NRL. Widely expressed.

The protein localises to the cytoplasm. It is found in the nucleus. Functionally, may be a transcriptional repressor of NRL function in photoreceptors. Does not repress CRX-mediated transactivation. In Homo sapiens (Human), this protein is Flt3-interacting zinc finger protein 1 (FIZ1).